A 505-amino-acid chain; its full sequence is ATP synthase subunit alpha (505 aa).

Residue 169-176 (GDRQTGKT) participates in ATP binding.

This sequence belongs to the ATPase alpha/beta chains family. In terms of assembly, F-type ATPases have 2 components, CF(1) - the catalytic core - and CF(0) - the membrane proton channel. CF(1) has five subunits: alpha(3), beta(3), gamma(1), delta(1), epsilon(1). CF(0) has three main subunits: a(1), b(2) and c(9-12). The alpha and beta chains form an alternating ring which encloses part of the gamma chain. CF(1) is attached to CF(0) by a central stalk formed by the gamma and epsilon chains, while a peripheral stalk is formed by the delta and b chains.

The protein localises to the cell membrane. The catalysed reaction is ATP + H2O + 4 H(+)(in) = ADP + phosphate + 5 H(+)(out). Produces ATP from ADP in the presence of a proton gradient across the membrane. The alpha chain is a regulatory subunit. This chain is ATP synthase subunit alpha, found in Alkaliphilus metalliredigens (strain QYMF).